Reading from the N-terminus, the 331-residue chain is Pantothenate kinase (331 aa).

109–116 (GSVAVGKS) serves as a coordination point for ATP.

The protein belongs to the prokaryotic pantothenate kinase family.

The protein localises to the cytoplasm. The enzyme catalyses (R)-pantothenate + ATP = (R)-4'-phosphopantothenate + ADP + H(+). It functions in the pathway cofactor biosynthesis; coenzyme A biosynthesis; CoA from (R)-pantothenate: step 1/5. In Rhizobium johnstonii (strain DSM 114642 / LMG 32736 / 3841) (Rhizobium leguminosarum bv. viciae), this protein is Pantothenate kinase.